We begin with the raw amino-acid sequence, 101 residues long: Small ribosomal subunit protein uS14 (101 aa).

Belongs to the universal ribosomal protein uS14 family. Part of the 30S ribosomal subunit. Contacts proteins S3 and S10.

Its function is as follows. Binds 16S rRNA, required for the assembly of 30S particles and may also be responsible for determining the conformation of the 16S rRNA at the A site. This is Small ribosomal subunit protein uS14 from Pseudoalteromonas atlantica (strain T6c / ATCC BAA-1087).